The chain runs to 218 residues: Small ribosomal subunit protein uS3c (218 aa).

The KH type-2 domain maps to 47-118 (VQKNMRISSG…RLNIAITRVA (72 aa)).

The protein belongs to the universal ribosomal protein uS3 family. Part of the 30S ribosomal subunit.

The protein localises to the plastid. It localises to the chloroplast. This is Small ribosomal subunit protein uS3c (rps3) from Calycanthus floridus var. glaucus (Eastern sweetshrub).